The primary structure comprises 409 residues: Mitochondrial import inner membrane translocase subunit TIM50-B (409 aa).

Residues 1–42 (MSLIAIERVLCGWPKICRKLIVTSRSLTSGLRRALVKQPRKG) constitute a mitochondrion transit peptide. Topologically, residues 43-127 (GDVGKPGMEL…ELERAFRRMK (85 aa)) are mitochondrial matrix. The interval 93-114 (PQTSEESNDEESRERRKLEEEE) is disordered. Over residues 102 to 111 (EESRERRKLE) the composition is skewed to basic and acidic residues. Residues 128-148 (LGFGLFGIGSMLFSFWAIYFY) form a helical membrane-spanning segment. The Mitochondrial intermembrane portion of the chain corresponds to 149–409 (GRPSLDEHGN…KNWTRGFINH (261 aa)). One can recognise an FCP1 homology domain in the interval 205-348 (YVQPPYTLVL…FELTSFLSVL (144 aa)).

Belongs to the TIM50 family. Component of the TIM23 complex at least composed of Tim23, Tim17 (Tim17a1, Tim17a2 or Tim17b1) and a Tim50. Exclusively expressed in the testis.

Its subcellular location is the mitochondrion inner membrane. In terms of biological role, essential component of the TIM23 complex, a complex that mediates the translocation of transit peptide-containing proteins across the mitochondrial inner membrane. This is Mitochondrial import inner membrane translocase subunit TIM50-B (ttm2) from Drosophila melanogaster (Fruit fly).